We begin with the raw amino-acid sequence, 309 residues long: Glutaminase (309 aa).

The substrate site is built by Ser65, Asn117, Glu162, Asn169, Tyr193, Tyr245, and Val263.

This sequence belongs to the glutaminase family. Homotetramer.

The catalysed reaction is L-glutamine + H2O = L-glutamate + NH4(+). In Bacillus cytotoxicus (strain DSM 22905 / CIP 110041 / 391-98 / NVH 391-98), this protein is Glutaminase.